A 398-amino-acid chain; its full sequence is 1-deoxy-D-xylulose 5-phosphate reductoisomerase (398 aa).

NADPH-binding residues include T10, G11, S12, I13, K37, N38, and N124. K125 is a binding site for 1-deoxy-D-xylulose 5-phosphate. Residue E126 coordinates NADPH. D150 provides a ligand contact to Mn(2+). 4 residues coordinate 1-deoxy-D-xylulose 5-phosphate: S151, E152, S186, and H209. Position 152 (E152) interacts with Mn(2+). Position 215 (G215) interacts with NADPH. S222, N227, K228, and E231 together coordinate 1-deoxy-D-xylulose 5-phosphate. Position 231 (E231) interacts with Mn(2+).

The protein belongs to the DXR family. As to quaternary structure, homodimer. Mg(2+) serves as cofactor. It depends on Mn(2+) as a cofactor.

It carries out the reaction 2-C-methyl-D-erythritol 4-phosphate + NADP(+) = 1-deoxy-D-xylulose 5-phosphate + NADPH + H(+). The protein operates within isoprenoid biosynthesis; isopentenyl diphosphate biosynthesis via DXP pathway; isopentenyl diphosphate from 1-deoxy-D-xylulose 5-phosphate: step 1/6. Functionally, catalyzes the NADPH-dependent rearrangement and reduction of 1-deoxy-D-xylulose-5-phosphate (DXP) to 2-C-methyl-D-erythritol 4-phosphate (MEP). The sequence is that of 1-deoxy-D-xylulose 5-phosphate reductoisomerase from Buchnera aphidicola subsp. Acyrthosiphon pisum (strain 5A).